A 291-amino-acid chain; its full sequence is 4-diphosphocytidyl-2-C-methyl-D-erythritol kinase (291 aa).

Residue Lys21 is part of the active site. 104–114 contributes to the ATP binding site; the sequence is PMGGGLGGGSS. Residue Asp146 is part of the active site.

It belongs to the GHMP kinase family. IspE subfamily.

The catalysed reaction is 4-CDP-2-C-methyl-D-erythritol + ATP = 4-CDP-2-C-methyl-D-erythritol 2-phosphate + ADP + H(+). The protein operates within isoprenoid biosynthesis; isopentenyl diphosphate biosynthesis via DXP pathway; isopentenyl diphosphate from 1-deoxy-D-xylulose 5-phosphate: step 3/6. Catalyzes the phosphorylation of the position 2 hydroxy group of 4-diphosphocytidyl-2C-methyl-D-erythritol. The sequence is that of 4-diphosphocytidyl-2-C-methyl-D-erythritol kinase from Methylococcus capsulatus (strain ATCC 33009 / NCIMB 11132 / Bath).